A 225-amino-acid chain; its full sequence is MPNETNCTLDFEQSVQLFKEYNLFITAFLLFLTIILQYGYATRTKVIYTLKMIVLWCFWPLNIAVGVISCTYPPNTGGLVVAIILTVFACLSFVGYWIQSIRLFKRCRSWWSFNPESNAVGSILLTNGQQCNFAIESVPMVLSPIIKNGVLYCEGQWLAKCEPDHLPKDIFVCTPDRRNIYRMVQKYTGDQSGNKKRFATFVYAKQSVDTGELESVATGGSSLYT.

The Virion surface portion of the chain corresponds to 1–20 (MPNETNCTLDFEQSVQLFKE). Residues 21–41 (YNLFITAFLLFLTIILQYGYA) traverse the membrane as a helical segment. Over 42-51 (TRTKVIYTLK) the chain is Intravirion. A helical transmembrane segment spans residues 52–72 (MIVLWCFWPLNIAVGVISCTY). The Virion surface portion of the chain corresponds to 73 to 77 (PPNTG). A helical transmembrane segment spans residues 78-98 (GLVVAIILTVFACLSFVGYWI). Residues 99–225 (QSIRLFKRCR…VATGGSSLYT (127 aa)) are Intravirion-facing.

Belongs to the gammacoronaviruses M protein family. Homomultimer. Interacts with envelope E protein in the budding compartment of the host cell, which is located between endoplasmic reticulum and the Golgi complex. Forms a complex with HE and S proteins. Interacts with nucleocapsid N protein. This interaction probably participates in RNA packaging into the virus.

It is found in the virion membrane. The protein resides in the host Golgi apparatus membrane. Functionally, component of the viral envelope that plays a central role in virus morphogenesis and assembly via its interactions with other viral proteins. This is Membrane protein from Avian infectious bronchitis virus (strain Beaudette US) (IBV).